The primary structure comprises 354 residues: Methylthioribose-1-phosphate isomerase (354 aa).

Substrate-binding positions include 58–60 (RGA), arginine 101, and glutamine 204. Aspartate 245 functions as the Proton donor in the catalytic mechanism. 255 to 256 (NK) is a substrate binding site.

This sequence belongs to the eIF-2B alpha/beta/delta subunits family. MtnA subfamily.

It catalyses the reaction 5-(methylsulfanyl)-alpha-D-ribose 1-phosphate = 5-(methylsulfanyl)-D-ribulose 1-phosphate. The protein operates within amino-acid biosynthesis; L-methionine biosynthesis via salvage pathway; L-methionine from S-methyl-5-thio-alpha-D-ribose 1-phosphate: step 1/6. Functionally, catalyzes the interconversion of methylthioribose-1-phosphate (MTR-1-P) into methylthioribulose-1-phosphate (MTRu-1-P). This is Methylthioribose-1-phosphate isomerase from Xylella fastidiosa (strain 9a5c).